The chain runs to 189 residues: dCTP deaminase, dUMP-forming (189 aa).

DCTP contacts are provided by residues 101-106, Asp-119, 127-129, Gln-148, Tyr-162, and Gln-174; these read KSSLGR and TLE. Glu-129 (proton donor/acceptor) is an active-site residue.

Belongs to the dCTP deaminase family. Homotrimer.

The catalysed reaction is dCTP + 2 H2O = dUMP + NH4(+) + diphosphate. It functions in the pathway pyrimidine metabolism; dUMP biosynthesis; dUMP from dCTP: step 1/1. Bifunctional enzyme that catalyzes both the deamination of dCTP to dUTP and the hydrolysis of dUTP to dUMP without releasing the toxic dUTP intermediate. The sequence is that of dCTP deaminase, dUMP-forming from Rhodococcus jostii (strain RHA1).